Consider the following 513-residue polypeptide: Pantetheinase (513 aa).

The N-terminal stretch at 1–22 (MITSPLLAYVAILFFCVLKASS) is a signal peptide. Residues 40–307 (APLTPVSHEE…GKLLLSQLDS (268 aa)) form the CN hydrolase domain. E80 acts as the Proton acceptor in catalysis. N147 carries N-linked (GlcNAc...) asparagine glycosylation. The Proton donor role is filled by K179. The Nucleophile role is filled by C212. N-linked (GlcNAc...) asparagine glycans are attached at residues N315 and N353. A lipid anchor (GPI-anchor amidated glycine) is attached at G487. Positions 488-513 (ASADLVAQGLRVMLGVIITIMYSLSW) are cleaved as a propeptide — removed in mature form.

This sequence belongs to the carbon-nitrogen hydrolase superfamily. BTD/VNN family. As to quaternary structure, monomer. As to expression, detected in kidney (at protein level).

It localises to the cell membrane. It catalyses the reaction (R)-pantetheine + H2O = cysteamine + (R)-pantothenate. Its function is as follows. Amidohydrolase that hydrolyzes specifically one of the carboamide linkages in D-pantetheine thus recycling pantothenic acid (vitamin B5) and releasing cysteamine. This chain is Pantetheinase (VNN1), found in Sus scrofa (Pig).